The following is a 353-amino-acid chain: MSNGGDQQQHGLLGPDGAPGRVVVVTGLSGAGKSTALHALEDLGFFCVDNLPTSLVQPAVEACESGGITRIGLGIDVRVGSFLAGATAALDSIRTGRDVVILFLDASDETLLRRFSETRRPHPLTTGGSGAIAMLDGVLLERERLASLRARATIELDTTRLSTHDLRRVVIERLRPARVEVPRMSTRFVSFGYKYGIPLDADLLFDVRFLDNPYFVHGLRELTGNDEPVREYILKNPDALEFICRTEQLLSFCMPRYASEGKSYLTVGIGCTGGRHRSVVLTNALSDSLRRKTGLPITVVHRDVARVSTSGVPSGVGEGMAGAPGVDLRLAQPGATPSEPRPASDTSVTGGER.

An ATP-binding site is contributed by 27–34 (GLSGAGKS). 76 to 79 (DVRV) contributes to the GTP binding site. Residues 310 to 353 (SGVPSGVGEGMAGAPGVDLRLAQPGATPSEPRPASDTSVTGGER) are disordered. A compositionally biased stretch (polar residues) spans 344 to 353 (SDTSVTGGER).

It belongs to the RapZ-like family.

Displays ATPase and GTPase activities. This Sorangium cellulosum (strain So ce56) (Polyangium cellulosum (strain So ce56)) protein is Nucleotide-binding protein sce5766.